Reading from the N-terminus, the 159-residue chain is Nucleotide-binding protein Pmen_0939 (159 aa).

The protein belongs to the YajQ family.

Its function is as follows. Nucleotide-binding protein. The sequence is that of Nucleotide-binding protein Pmen_0939 from Ectopseudomonas mendocina (strain ymp) (Pseudomonas mendocina).